Consider the following 760-residue polypeptide: 5-methyltetrahydropteroyltriglutamate--homocysteine methyltransferase (760 aa).

Residues 17–20 (RELK) and lysine 118 contribute to the 5-methyltetrahydropteroyltri-L-glutamate site. L-homocysteine-binding positions include 436-438 (IGS) and glutamate 489. L-methionine-binding positions include 436–438 (IGS) and glutamate 489. Residues 520-521 (RC) and tryptophan 566 contribute to the 5-methyltetrahydropteroyltri-L-glutamate site. Aspartate 604 is a binding site for L-homocysteine. An L-methionine-binding site is contributed by aspartate 604. Glutamate 610 contacts 5-methyltetrahydropteroyltri-L-glutamate. Histidine 646, cysteine 648, and glutamate 670 together coordinate Zn(2+). Residue histidine 699 is the Proton donor of the active site. Residue cysteine 731 participates in Zn(2+) binding.

Belongs to the vitamin-B12 independent methionine synthase family. Requires Zn(2+) as cofactor.

The enzyme catalyses 5-methyltetrahydropteroyltri-L-glutamate + L-homocysteine = tetrahydropteroyltri-L-glutamate + L-methionine. It participates in amino-acid biosynthesis; L-methionine biosynthesis via de novo pathway; L-methionine from L-homocysteine (MetE route): step 1/1. Its function is as follows. Catalyzes the transfer of a methyl group from 5-methyltetrahydrofolate to homocysteine resulting in methionine formation. This Vibrio harveyi (Beneckea harveyi) protein is 5-methyltetrahydropteroyltriglutamate--homocysteine methyltransferase.